A 431-amino-acid polypeptide reads, in one-letter code: Glutamate-1-semialdehyde 2,1-aminomutase (431 aa).

N6-(pyridoxal phosphate)lysine is present on Lys269.

Belongs to the class-III pyridoxal-phosphate-dependent aminotransferase family. HemL subfamily. As to quaternary structure, homodimer. Pyridoxal 5'-phosphate serves as cofactor.

It is found in the cytoplasm. The catalysed reaction is (S)-4-amino-5-oxopentanoate = 5-aminolevulinate. Its pathway is porphyrin-containing compound metabolism; protoporphyrin-IX biosynthesis; 5-aminolevulinate from L-glutamyl-tRNA(Glu): step 2/2. It functions in the pathway porphyrin-containing compound metabolism; chlorophyll biosynthesis. The chain is Glutamate-1-semialdehyde 2,1-aminomutase from Chlorobium luteolum (strain DSM 273 / BCRC 81028 / 2530) (Pelodictyon luteolum).